A 216-amino-acid polypeptide reads, in one-letter code: Nudix hydrolase 26, chloroplastic (216 aa).

The transit peptide at 1–53 directs the protein to the chloroplast; it reads MALYRPLLLHHPTSPSVTTFLRNYPSKPIKFSSLPFLHRCRKSRVSSSSARCC. Residues 62 to 209 enclose the Nudix hydrolase domain; that stretch reads GYRRNVGVCL…KKPVYKEVMS (148 aa). The Nudix box signature appears at 95–116; the sequence is GGIDEGEDPRVAVMRELKEETG. The Mn(2+) site is built by glutamate 110 and glutamate 114.

This sequence belongs to the Nudix hydrolase family. The cofactor is Mg(2+). Mn(2+) serves as cofactor. As to expression, expressed in roots, leaves, stems and inflorescences.

Its subcellular location is the plastid. The protein localises to the chloroplast. Mediates the hydrolysis of some nucleoside diphosphate derivatives. Can use diadenosine 5',5'''-P(1)P(5) pentaphosphate (Ap(5)A), diadenosine 5',5'''-P(1)P(4) tetraphosphate (Ap(4)A) and diadenosine 5',5'''-P(1)P(3) triphosphate (Ap(3)A) as substrates. This is Nudix hydrolase 26, chloroplastic (NUDT26) from Arabidopsis thaliana (Mouse-ear cress).